The following is a 479-amino-acid chain: Caspase-8 (479 aa).

Positions 1–216 (MDFSRNLYDI…TISDSPREQD (216 aa)) are excised as a propeptide. 2 DED domains span residues 2-80 (DFSR…TYLN) and 100-177 (AYRV…IIND). 2 positions are modified to phosphoserine: Ser188 and Ser211. Lys224 is subject to N6-acetyllysine. The active site involves His317. Tyr334 is modified (phosphotyrosine). The active site involves Cys360. A propeptide spanning residues 375-384 (SEEQPYLEMD) is cleaved from the precursor. Position 380 is a phosphotyrosine; by SRC (Tyr380). Ser387 is modified (phosphoserine; by CDK1). A (Microbial infection) ADP-riboxanated arginine modification is found at Arg413.

Belongs to the peptidase C14A family. In terms of assembly, heterotetramer that consists of two anti-parallel arranged heterodimers, each one formed by a 18 kDa (p18) and a 10 kDa (p10) subunit. Component of the death-induced signaling complex (DISC) composed of cell surface receptor FAS/CD95 or TNFRSF1A, adapter protein FADD and the CASP8 protease; recruitment of CASP8 to the complex is required for processing of CASP8 into the p18 and p10 subunits. Component of the AIM2 PANoptosome complex, a multiprotein complex that drives inflammatory cell death (PANoptosis). Interacts with CFLAR and PEA15. Interacts with TNFAIP8L2. Interacts with CASP8AP2. Interacts with RFFL and RNF34; negatively regulate CASP8 through proteasomal degradation. Interacts with NOL3; decreases CASP8 activity in a mitochondria localization- and phosphorylation-dependent manner and this interaction is dissociated by calcium. Interacts with UBR2ca. Interacts with RIPK1. Interacts with stimulated TNFRSF10B; this interaction is followed by CASP8 proteolytic cleavage and activation. Interacts (phosphorylated on Tyr-380) with PIK3R1. As to quaternary structure, interacts at the endoplasmic reticulum with a complex containing BCAP31, BAP29, BCL2 and/or BCL2L1. (Microbial infection) Interacts with human cytomegalovirus/HHV-5 protein vICA/UL36; this interaction inhibits CASP8 activation. In terms of assembly, (Microbial infection) Interacts with NleF from pathogenic E.coli. As to quaternary structure, (Microbial infection) Interacts with molluscum contagiosum virus protein MC160. (Microbial infection) Interacts (via RIP homotypic interaction motif) with herpes simplex virus 1/HHV-1 protein RIR1/ICP6 (via RIP homotypic interaction motif); this interaction prevents necroptosis activation. In terms of assembly, (Microbial infection) Interacts (via RIP homotypic interaction motif) with herpes simplex virus 2/HHV-2 protein RIR1/ICP10 (via RIP homotypic interaction motif); this interaction prevents necroptosis activation. Generation of the p10 and p18 subunits requires association with the death-inducing signaling complex (DISC), whereas additional processing is likely due to the autocatalytic activity of the activated protease. GZMB and CASP10 can be involved in these processing events. In terms of processing, phosphorylation on Ser-387 during mitosis by CDK1 inhibits activation by proteolysis and prevents apoptosis. Phosphorylation on Tyr-380 by SRC is mediated by interaction with the SRC SH2 domain and does not affect dimerization or recruitment to the death-inducing signaling complex (DISC) but negatively regulates DISC-mediated processing and activation of CASP8, down-regulating its proapoptotic function. Phosphorylation on Tyr-380 also enhances localization to lamellipodia in migrating cells. Post-translationally, (Microbial infection) ADP-riboxanation by C.violaceum CopC blocks CASP8 processing, preventing CASP8 activation and ability to mediate extrinsic apoptosis. (Microbial infection) Proteolytically cleaved by the cowpox virus CRMA death inhibitory protein. Isoform 1, isoform 5 and isoform 7 are expressed in a wide variety of tissues. Highest expression in peripheral blood leukocytes, spleen, thymus and liver. Barely detectable in brain, testis and skeletal muscle.

It localises to the cytoplasm. It is found in the nucleus. The protein localises to the cell projection. The protein resides in the lamellipodium. It carries out the reaction Strict requirement for Asp at position P1 and has a preferred cleavage sequence of (Leu/Asp/Val)-Glu-Thr-Asp-|-(Gly/Ser/Ala).. CASP8 activity is restricted by RIPK1. Inhibited by the effector protein NleF that is produced by pathogenic E.coli; this inhibits apoptosis. In terms of biological role, thiol protease that plays a key role in programmed cell death by acting as a molecular switch for apoptosis, necroptosis and pyroptosis, and is required to prevent tissue damage during embryonic development and adulthood. Initiator protease that induces extrinsic apoptosis by mediating cleavage and activation of effector caspases responsible for FAS/CD95-mediated and TNFRSF1A-induced cell death. Cleaves and activates effector caspases CASP3, CASP4, CASP6, CASP7, CASP9 and CASP10. Binding to the adapter molecule FADD recruits it to either receptor FAS/TNFRSF6 or TNFRSF1A. The resulting aggregate called the death-inducing signaling complex (DISC) performs CASP8 proteolytic activation. The active dimeric enzyme is then liberated from the DISC and free to activate downstream apoptotic proteases. Proteolytic fragments of the N-terminal propeptide (termed CAP3, CAP5 and CAP6) are likely retained in the DISC. In addition to extrinsic apoptosis, also acts as a negative regulator of necroptosis: acts by cleaving RIPK1 at 'Asp-324', which is crucial to inhibit RIPK1 kinase activity, limiting TNF-induced apoptosis, necroptosis and inflammatory response. Also able to initiate pyroptosis by mediating cleavage and activation of gasdermin-C and -D (GSDMC and GSDMD, respectively): gasdermin cleavage promotes release of the N-terminal moiety that binds to membranes and forms pores, triggering pyroptosis. Initiates pyroptosis following inactivation of MAP3K7/TAK1. Also acts as a regulator of innate immunity by mediating cleavage and inactivation of N4BP1 downstream of TLR3 or TLR4, thereby promoting cytokine production. May participate in the Granzyme B (GZMB) cell death pathways. Cleaves PARP1 and PARP2. Independent of its protease activity, promotes cell migration following phosphorylation at Tyr-380. Lacks the catalytic site and may interfere with the pro-apoptotic activity of the complex. Functionally, lacks the catalytic site and may interfere with the pro-apoptotic activity of the complex. Acts as an inhibitor of the caspase cascade. This is Caspase-8 from Homo sapiens (Human).